The primary structure comprises 1342 residues: DNA-directed RNA polymerase subunit beta (1342 aa).

This sequence belongs to the RNA polymerase beta chain family. In terms of assembly, the RNAP catalytic core consists of 2 alpha, 1 beta, 1 beta' and 1 omega subunit. When a sigma factor is associated with the core the holoenzyme is formed, which can initiate transcription.

The enzyme catalyses RNA(n) + a ribonucleoside 5'-triphosphate = RNA(n+1) + diphosphate. DNA-dependent RNA polymerase catalyzes the transcription of DNA into RNA using the four ribonucleoside triphosphates as substrates. The protein is DNA-directed RNA polymerase subunit beta of Histophilus somni (strain 2336) (Haemophilus somnus).